The following is a 470-amino-acid chain: Glutamate--tRNA ligase (470 aa).

Positions 15 to 25 match the 'HIGH' region motif; the sequence is PSPTGFLHIGG. Residues 240–244 carry the 'KMSKS' region motif; that stretch reads KLSKR. ATP is bound at residue Lys243.

Belongs to the class-I aminoacyl-tRNA synthetase family. Glutamate--tRNA ligase type 1 subfamily. As to quaternary structure, monomer.

The protein resides in the cytoplasm. It catalyses the reaction tRNA(Glu) + L-glutamate + ATP = L-glutamyl-tRNA(Glu) + AMP + diphosphate. In terms of biological role, catalyzes the attachment of glutamate to tRNA(Glu) in a two-step reaction: glutamate is first activated by ATP to form Glu-AMP and then transferred to the acceptor end of tRNA(Glu). In Caulobacter vibrioides (strain ATCC 19089 / CIP 103742 / CB 15) (Caulobacter crescentus), this protein is Glutamate--tRNA ligase.